The chain runs to 523 residues: Probable lipid II flippase MurJ (523 aa).

12 consecutive transmembrane segments (helical) span residues 98 to 118 (AFYS…IVYV), 146 to 166 (IMFG…ILNA), 170 to 190 (FGLP…FTFM), 201 to 221 (GLAW…AVAL), 246 to 266 (MLPG…NLYF), 284 to 304 (LLEL…LPTL), 328 to 348 (LFLA…IIEV), 360 to 380 (VQMT…VSCS), 395 to 415 (VPMV…PVLM), 422 to 442 (GLMI…MGLL), 461 to 481 (FVLA…LMAQ), and 489 to 509 (LALF…AYVL).

This sequence belongs to the MurJ/MviN family.

It localises to the cell inner membrane. It functions in the pathway cell wall biogenesis; peptidoglycan biosynthesis. Its function is as follows. Involved in peptidoglycan biosynthesis. Transports lipid-linked peptidoglycan precursors from the inner to the outer leaflet of the cytoplasmic membrane. The chain is Probable lipid II flippase MurJ from Bdellovibrio bacteriovorus (strain ATCC 15356 / DSM 50701 / NCIMB 9529 / HD100).